We begin with the raw amino-acid sequence, 78 residues long: Acyl carrier protein (78 aa).

The 76-residue stretch at S2–Q77 folds into the Carrier domain. S37 bears the O-(pantetheine 4'-phosphoryl)serine mark.

Belongs to the acyl carrier protein (ACP) family. In terms of processing, 4'-phosphopantetheine is transferred from CoA to a specific serine of apo-ACP by AcpS. This modification is essential for activity because fatty acids are bound in thioester linkage to the sulfhydryl of the prosthetic group.

Its subcellular location is the cytoplasm. The protein operates within lipid metabolism; fatty acid biosynthesis. Carrier of the growing fatty acid chain in fatty acid biosynthesis. The sequence is that of Acyl carrier protein from Rhizobium etli (strain CIAT 652).